The sequence spans 223 residues: DNA mismatch repair protein MutH (223 aa).

The protein belongs to the MutH family.

It localises to the cytoplasm. Sequence-specific endonuclease that cleaves unmethylated GATC sequences. It is involved in DNA mismatch repair. The polypeptide is DNA mismatch repair protein MutH (Shewanella baltica (strain OS185)).